The sequence spans 210 residues: GTP pyrophosphokinase YwaC (210 aa).

The protein belongs to the RelA/SpoT family. Homotetramer.

The catalysed reaction is GTP + ATP = guanosine 3'-diphosphate 5'-triphosphate + AMP. It participates in purine metabolism; ppGpp biosynthesis; ppGpp from GTP: step 1/2. Functions as a (p)ppGpp synthase; GDP can be used instead of GTP, resulting in an increase of (p)ppGpp synthesis. Overexpression in relA mutants (triple relA-yjbM-ywaC deletions and single relA deletions) leads to growth arrest; GTP levels fall drastically, various guanine-related nucleotides are synthesized (ppGp or pGpp), the cellular transcriptional profile changes dramatically and 70S ribosome dimerization occurs. Overexpression in the presence of a wild-type relA gene does not have these effects. In eubacteria ppGpp (guanosine 3'-diphosphate 5'-diphosphate) is a mediator of the stringent response that coordinates a variety of cellular activities in response to changes in nutritional abundance. activities in response to changes in nutritional abundance. YwaC has probably a minor role in stringent response. This chain is GTP pyrophosphokinase YwaC (ywaC), found in Bacillus subtilis (strain 168).